The chain runs to 501 residues: Geissoschizine oxidase (501 aa).

The chain crosses the membrane as a helical span at residues 1–21 (MEFSFSSPLLYILYFLLFFIV). Residue cysteine 442 participates in heme binding.

It belongs to the cytochrome P450 family. Requires heme as cofactor.

It localises to the membrane. It carries out the reaction (19E)-geissoschizine + reduced [NADPH--hemoprotein reductase] + O2 = akuammicine + formate + oxidized [NADPH--hemoprotein reductase] + H2O + H(+). Its pathway is alkaloid biosynthesis. Its function is as follows. A cytochrome P450 monooxygenase involved in the biosynthesis of strychnos monoterpene indole alkaloids (MIAs) natural products, compounds with effects on glucose absorption. Catalyzes the conversion of geissoschizine to akuammicine. The sequence is that of Geissoschizine oxidase from Alstonia scholaris (Dogbane).